A 207-amino-acid polypeptide reads, in one-letter code: Large ribosomal subunit protein uL4 (207 aa).

The interval K52–Q75 is disordered. A compositionally biased stretch (basic residues) spans G60–G71.

Belongs to the universal ribosomal protein uL4 family. In terms of assembly, part of the 50S ribosomal subunit.

In terms of biological role, one of the primary rRNA binding proteins, this protein initially binds near the 5'-end of the 23S rRNA. It is important during the early stages of 50S assembly. It makes multiple contacts with different domains of the 23S rRNA in the assembled 50S subunit and ribosome. Forms part of the polypeptide exit tunnel. This chain is Large ribosomal subunit protein uL4, found in Limosilactobacillus fermentum (strain NBRC 3956 / LMG 18251) (Lactobacillus fermentum).